The chain runs to 306 residues: tRNA dimethylallyltransferase (306 aa).

11–18 lines the ATP pocket; the sequence is APTAAGKT. 13-18 contacts substrate; the sequence is TAAGKT.

The protein belongs to the IPP transferase family. Monomer. Mg(2+) is required as a cofactor.

The enzyme catalyses adenosine(37) in tRNA + dimethylallyl diphosphate = N(6)-dimethylallyladenosine(37) in tRNA + diphosphate. Functionally, catalyzes the transfer of a dimethylallyl group onto the adenine at position 37 in tRNAs that read codons beginning with uridine, leading to the formation of N6-(dimethylallyl)adenosine (i(6)A). The protein is tRNA dimethylallyltransferase of Deinococcus radiodurans (strain ATCC 13939 / DSM 20539 / JCM 16871 / CCUG 27074 / LMG 4051 / NBRC 15346 / NCIMB 9279 / VKM B-1422 / R1).